Here is a 126-residue protein sequence, read N- to C-terminus: MSIIGIGIDFVEILRIKNIFLKYGDKFARKILSTEEWKKYILIDDSISFLAKKFVAKEAASKALGTGINHQITFNQLEFYKNKSGKPKLRFLKHALKKSKEIQCKSIHVSISDQKLYAYALVILEN.

Positions 9 and 58 each coordinate Mg(2+).

It belongs to the P-Pant transferase superfamily. AcpS family. The cofactor is Mg(2+).

The protein resides in the cytoplasm. The enzyme catalyses apo-[ACP] + CoA = holo-[ACP] + adenosine 3',5'-bisphosphate + H(+). Transfers the 4'-phosphopantetheine moiety from coenzyme A to a Ser of acyl-carrier-protein. This chain is Holo-[acyl-carrier-protein] synthase, found in Buchnera aphidicola subsp. Acyrthosiphon pisum (strain APS) (Acyrthosiphon pisum symbiotic bacterium).